The primary structure comprises 139 residues: Putative pre-16S rRNA nuclease (139 aa).

Belongs to the YqgF nuclease family.

The protein resides in the cytoplasm. Its function is as follows. Could be a nuclease involved in processing of the 5'-end of pre-16S rRNA. The sequence is that of Putative pre-16S rRNA nuclease from Thermoanaerobacter pseudethanolicus (strain ATCC 33223 / 39E) (Clostridium thermohydrosulfuricum).